The chain runs to 63 residues: MPKIIEAIYENGVFKPLQKVDLKEGEKIRILLKKIDVEKFIMAKLPEEKIRELERRFEDENLY.

It belongs to the UPF0165 family.

In terms of biological role, possibly the antitoxin component of a type II toxin-antitoxin (TA) system. The chain is Putative antitoxin AF_1084 from Archaeoglobus fulgidus (strain ATCC 49558 / DSM 4304 / JCM 9628 / NBRC 100126 / VC-16).